The chain runs to 615 residues: Putative binding protein BRA0576/BS1330_II0571 (615 aa).

The first 29 residues, Met-1–Ala-29, serve as a signal peptide directing secretion.

It belongs to the bacterial solute-binding protein 5 family.

It is found in the periplasm. This is Putative binding protein BRA0576/BS1330_II0571 from Brucella suis biovar 1 (strain 1330).